A 452-amino-acid polypeptide reads, in one-letter code: Probable ECA polymerase (452 aa).

11 helical membrane-spanning segments follow: residues 6–26 (FSGL…LTWF), 37–57 (VFFS…TSVL), 63–83 (VGVA…CFYG), 118–138 (VILM…NGFL), 155–175 (GVAL…VYFL), 181–201 (AWLF…MIVG), 207–227 (IIIA…ISLW), 228–248 (MLAA…LKRY), 341–361 (LVVM…GLII), 378–398 (YKAA…IVLV), and 410–430 (VFFL…FWLF).

This sequence belongs to the WzyE family. Probably part of a complex composed of WzxE, WzyE and WzzE.

It localises to the cell inner membrane. It participates in bacterial outer membrane biogenesis; enterobacterial common antigen biosynthesis. In terms of biological role, probably involved in the polymerization of enterobacterial common antigen (ECA) trisaccharide repeat units. This chain is Probable ECA polymerase, found in Salmonella gallinarum (strain 287/91 / NCTC 13346).